A 168-amino-acid polypeptide reads, in one-letter code: Small ribosomal subunit protein uS5 (168 aa).

Residues 13 to 76 (LKEQVVDIKR…EDAKKNLIHV (64 aa)) enclose the S5 DRBM domain.

This sequence belongs to the universal ribosomal protein uS5 family. In terms of assembly, part of the 30S ribosomal subunit. Contacts proteins S4 and S8.

Its function is as follows. With S4 and S12 plays an important role in translational accuracy. Located at the back of the 30S subunit body where it stabilizes the conformation of the head with respect to the body. In Alkaliphilus oremlandii (strain OhILAs) (Clostridium oremlandii (strain OhILAs)), this protein is Small ribosomal subunit protein uS5.